A 211-amino-acid polypeptide reads, in one-letter code: Ribosomal RNA small subunit methyltransferase G (211 aa).

3 residues coordinate S-adenosyl-L-methionine: glycine 73, phenylalanine 78, and arginine 141.

This sequence belongs to the methyltransferase superfamily. RNA methyltransferase RsmG family.

The protein localises to the cytoplasm. The enzyme catalyses guanosine(527) in 16S rRNA + S-adenosyl-L-methionine = N(7)-methylguanosine(527) in 16S rRNA + S-adenosyl-L-homocysteine. Its function is as follows. Specifically methylates the N7 position of guanine in position 527 of 16S rRNA. This is Ribosomal RNA small subunit methyltransferase G from Jannaschia sp. (strain CCS1).